A 658-amino-acid chain; its full sequence is Endoplasmic reticulum chaperone BiP (658 aa).

Positions 1–19 (MVTMKLFALVLLVSASVFA) are cleaved as a signal peptide. Residues 38-41 (GTTY), lysine 98, 228-230 (GGT), 294-301 (EKAKRALS), and 365-368 (GSTR) contribute to the ATP site. The tract at residues 127–281 (KPYIEVDIGD…KKKTGKDVRA (155 aa)) is nucleotide-binding (NBD). The tract at residues 410 to 420 (QDTGDLVLLDV) is interdomain linker. The substrate-binding (SBD) stretch occupies residues 421–501 (CPLTLGIETV…PRGVPQIEVT (81 aa)). A disordered region spans residues 634 to 658 (KLYGGAGAPPPEGAEGAEETEKDEL). Residues 648–658 (EGAEETEKDEL) show a composition bias toward acidic residues. The Prevents secretion from ER motif lies at 655 to 658 (KDEL).

This sequence belongs to the heat shock protein 70 family. As to quaternary structure, monomer and homooligomer; homooligomerization via the interdomain linker inactivates the chaperone activity and acts as a storage of hspa5/BiP molecules. Interacts with DNAJC10. Interacts with dnajb9/ERdj4; leading to recruit hspa5/BiP to ern1/ire1. Interacts with ern1/ire1; interaction takes place following interaction with dnajb9/ERdj4 and leads to inactivate ern1/IRE1.

The protein resides in the endoplasmic reticulum lumen. It carries out the reaction ATP + H2O = ADP + phosphate + H(+). The chaperone activity is regulated by ATP-induced allosteric coupling of the nucleotide-binding (NBD) and substrate-binding (SBD) domains. In the ADP-bound and nucleotide-free (apo) states, the two domains have little interaction. In contrast, in the ATP-bound state the two domains are tightly coupled, which results in drastically accelerated kinetics in both binding and release of polypeptide substrates. J domain-containing co-chaperones (dnajb9/ERdj4 or dnajc10/ERdj5) stimulate the ATPase activity and are required for efficient substrate recognition by hspa5/BiP. Homooligomerization inactivates participating hspa5/BiP protomers and probably act as reservoirs to store hspa5/BiP molecules when they are not needed by the cell. Its function is as follows. Endoplasmic reticulum chaperone that plays a key role in protein folding and quality control in the endoplasmic reticulum lumen. Involved in the correct folding of proteins and degradation of misfolded proteins via its interaction with dnajc10/ERdj5, probably to facilitate the release of dnajc10/ERdj5 from its substrate. Acts as a key repressor of the EIF2AK3/PERK and ERN1/IRE1-mediated unfolded protein response (UPR). In the unstressed endoplasmic reticulum, recruited by DNAJB9/ERdj4 to the luminal region of ERN1/IRE1, leading to disrupt the dimerization of ERN1/IRE1, thereby inactivating ERN1/IRE1. Also binds and inactivates EIF2AK3/PERK in unstressed cells. Accumulation of misfolded protein in the endoplasmic reticulum causes release of HSPA5/BiP from ERN1/IRE1 and EIF2AK3/PERK, allowing their homodimerization and subsequent activation. The protein is Endoplasmic reticulum chaperone BiP of Xenopus laevis (African clawed frog).